The primary structure comprises 179 residues: Transcription factor E (179 aa).

The HTH TFE/IIEalpha-type domain maps to 1–102 (MAKKKVKYTF…YWRFDSRKAA (102 aa)).

The protein belongs to the TFE family. In terms of assembly, monomer. Interaction with RNA polymerase subunits RpoF and RpoE is necessary for Tfe stimulatory transcription activity. Able to interact with Tbp and RNA polymerase in the absence of DNA promoter. Interacts both with the preinitiation and elongation complexes.

In terms of biological role, transcription factor that plays a role in the activation of archaeal genes transcribed by RNA polymerase. Facilitates transcription initiation by enhancing TATA-box recognition by TATA-box-binding protein (Tbp), and transcription factor B (Tfb) and RNA polymerase recruitment. Not absolutely required for transcription in vitro, but particularly important in cases where Tbp or Tfb function is not optimal. It dynamically alters the nucleic acid-binding properties of RNA polymerases by stabilizing the initiation complex and destabilizing elongation complexes. Seems to translocate with the RNA polymerase following initiation and acts by binding to the non template strand of the transcription bubble in elongation complexes. The chain is Transcription factor E from Methanosphaera stadtmanae (strain ATCC 43021 / DSM 3091 / JCM 11832 / MCB-3).